We begin with the raw amino-acid sequence, 625 residues long: Probable potassium transport system protein Kup (625 aa).

A run of 12 helical transmembrane segments spans residues 10–30, 50–70, 102–122, 135–155, 172–192, 214–234, 251–271, 284–304, 340–360, 369–389, 397–417, and 422–442; these read LAAL…TSPL, LLGV…LKYV, YFPL…DSVI, LGVA…AILV, FGPV…VNII, GFLA…AEAL, FLIA…LLLL, LGAW…IIAS, IYIP…VIGF, AYGI…FFVI, LILC…LFSA, and LFHG…LMLT.

It belongs to the HAK/KUP transporter (TC 2.A.72) family.

The protein localises to the cell inner membrane. It carries out the reaction K(+)(in) + H(+)(in) = K(+)(out) + H(+)(out). In terms of biological role, transport of potassium into the cell. Likely operates as a K(+):H(+) symporter. In Herminiimonas arsenicoxydans, this protein is Probable potassium transport system protein Kup.